The chain runs to 425 residues: Light-independent protochlorophyllide reductase subunit N (425 aa).

[4Fe-4S] cluster contacts are provided by Cys17, Cys42, and Cys103.

Belongs to the BchN/ChlN family. In terms of assembly, protochlorophyllide reductase is composed of three subunits; ChlL, ChlN and ChlB. Forms a heterotetramer of two ChlB and two ChlN subunits. [4Fe-4S] cluster is required as a cofactor.

The catalysed reaction is chlorophyllide a + oxidized 2[4Fe-4S]-[ferredoxin] + 2 ADP + 2 phosphate = protochlorophyllide a + reduced 2[4Fe-4S]-[ferredoxin] + 2 ATP + 2 H2O. It functions in the pathway porphyrin-containing compound metabolism; chlorophyll biosynthesis (light-independent). Component of the dark-operative protochlorophyllide reductase (DPOR) that uses Mg-ATP and reduced ferredoxin to reduce ring D of protochlorophyllide (Pchlide) to form chlorophyllide a (Chlide). This reaction is light-independent. The NB-protein (ChlN-ChlB) is the catalytic component of the complex. This chain is Light-independent protochlorophyllide reductase subunit N, found in Synechococcus sp. (strain CC9605).